The following is a 261-amino-acid chain: Cytochrome c oxidase subunit 3 (261 aa).

The Mitochondrial matrix portion of the chain corresponds to 1-15; that stretch reads MTHQTHAYHMVNPSP. A helical transmembrane segment spans residues 16-34; it reads WPLTGALSALLMTSGLTMW. Residues 35–40 lie on the Mitochondrial intermembrane side of the membrane; the sequence is FHFNSM. The chain crosses the membrane as a helical span at residues 41–66; the sequence is LLLSLGLLTNTLTMYQWWRDIIREST. At 67 to 72 the chain is on the mitochondrial matrix side; the sequence is FQGHHT. The chain crosses the membrane as a helical span at residues 73 to 105; the sequence is SVVQKGLRYGMILFIISEVLFFTGFFWAFYHSS. Topologically, residues 106 to 128 are mitochondrial intermembrane; it reads LAPTPELGGCWPPTGIHPLNPLE. Residues 129 to 152 form a helical membrane-spanning segment; sequence VPLLNTSILLASGVSITWAHHSLM. Residues 153 to 155 are Mitochondrial matrix-facing; it reads EGD. Residues 156–183 form a helical membrane-spanning segment; the sequence is RKHMIQALSITIALGVYFTLLQASEYYE. Topologically, residues 184–190 are mitochondrial intermembrane; sequence APFTISD. A helical membrane pass occupies residues 191 to 223; sequence GVYGSTFFVATGFHGLHVIIGSTFLAVCLLRQL. Residues 224 to 232 lie on the Mitochondrial matrix side of the membrane; that stretch reads KFHFTSNHH. A helical membrane pass occupies residues 233-256; it reads FGFEAAAWYWHFVDVVWLFLYVSI. At 257–261 the chain is on the mitochondrial intermembrane side; it reads YWWGS.

Belongs to the cytochrome c oxidase subunit 3 family. Component of the cytochrome c oxidase (complex IV, CIV), a multisubunit enzyme composed of 14 subunits. The complex is composed of a catalytic core of 3 subunits MT-CO1, MT-CO2 and MT-CO3, encoded in the mitochondrial DNA, and 11 supernumerary subunits COX4I, COX5A, COX5B, COX6A, COX6B, COX6C, COX7A, COX7B, COX7C, COX8 and NDUFA4, which are encoded in the nuclear genome. The complex exists as a monomer or a dimer and forms supercomplexes (SCs) in the inner mitochondrial membrane with NADH-ubiquinone oxidoreductase (complex I, CI) and ubiquinol-cytochrome c oxidoreductase (cytochrome b-c1 complex, complex III, CIII), resulting in different assemblies (supercomplex SCI(1)III(2)IV(1) and megacomplex MCI(2)III(2)IV(2)).

It localises to the mitochondrion inner membrane. It catalyses the reaction 4 Fe(II)-[cytochrome c] + O2 + 8 H(+)(in) = 4 Fe(III)-[cytochrome c] + 2 H2O + 4 H(+)(out). Component of the cytochrome c oxidase, the last enzyme in the mitochondrial electron transport chain which drives oxidative phosphorylation. The respiratory chain contains 3 multisubunit complexes succinate dehydrogenase (complex II, CII), ubiquinol-cytochrome c oxidoreductase (cytochrome b-c1 complex, complex III, CIII) and cytochrome c oxidase (complex IV, CIV), that cooperate to transfer electrons derived from NADH and succinate to molecular oxygen, creating an electrochemical gradient over the inner membrane that drives transmembrane transport and the ATP synthase. Cytochrome c oxidase is the component of the respiratory chain that catalyzes the reduction of oxygen to water. Electrons originating from reduced cytochrome c in the intermembrane space (IMS) are transferred via the dinuclear copper A center (CU(A)) of subunit 2 and heme A of subunit 1 to the active site in subunit 1, a binuclear center (BNC) formed by heme A3 and copper B (CU(B)). The BNC reduces molecular oxygen to 2 water molecules using 4 electrons from cytochrome c in the IMS and 4 protons from the mitochondrial matrix. The sequence is that of Cytochrome c oxidase subunit 3 (MT-CO3) from Sus scrofa (Pig).